Here is a 235-residue protein sequence, read N- to C-terminus: 2-C-methyl-D-erythritol 4-phosphate cytidylyltransferase (235 aa).

Belongs to the IspD/TarI cytidylyltransferase family. IspD subfamily.

It catalyses the reaction 2-C-methyl-D-erythritol 4-phosphate + CTP + H(+) = 4-CDP-2-C-methyl-D-erythritol + diphosphate. It functions in the pathway isoprenoid biosynthesis; isopentenyl diphosphate biosynthesis via DXP pathway; isopentenyl diphosphate from 1-deoxy-D-xylulose 5-phosphate: step 2/6. Functionally, catalyzes the formation of 4-diphosphocytidyl-2-C-methyl-D-erythritol from CTP and 2-C-methyl-D-erythritol 4-phosphate (MEP). The chain is 2-C-methyl-D-erythritol 4-phosphate cytidylyltransferase from Mycolicibacterium paratuberculosis (strain ATCC BAA-968 / K-10) (Mycobacterium paratuberculosis).